Reading from the N-terminus, the 905-residue chain is Coatomer subunit beta' (905 aa).

WD repeat units lie at residues 13–52, 55–94, 97–136, 140–180, 183–224, 227–266, 350–388, and 390–425; these read AMSD…LVKT, VCDL…RVHM, AHSD…SCSQ, GHTH…PNFT, GHEK…CVQT, GHAQ…LEST, SCEI…NKSF, and SAQE…KSFK. Lysine 627 is subject to N6-acetyllysine. Residues 746-783 form a WD 9 repeat; the sequence is IRTGRLPEAAFLARTYLPSQVSRVVKLWRENLSKVNQK. The interval 837 to 905 is disordered; the sequence is EEAKRFQPSR…INLDEDILDD (69 aa). Serine 859 carries the phosphoserine modification. Residues 867–891 are a coiled coil; that stretch reads QTTHKEEKSFQELEDDLDTMELEDI. A compositionally biased stretch (acidic residues) spans 878 to 905; the sequence is ELEDDLDTMELEDIDTTDINLDEDILDD.

It belongs to the WD repeat COPB2 family. In terms of assembly, oligomeric complex that consists of at least the alpha, beta, beta', gamma, delta, epsilon and zeta subunits. Probably interacts with PEX11A. Interacts with JAGN1. Interacts with SCYL1.

The protein resides in the cytoplasm. It localises to the cytosol. Its subcellular location is the golgi apparatus membrane. It is found in the cytoplasmic vesicle. The protein localises to the COPI-coated vesicle membrane. Functionally, the coatomer is a cytosolic protein complex that binds to dilysine motifs and reversibly associates with Golgi non-clathrin-coated vesicles, which further mediate biosynthetic protein transport from the ER, via the Golgi up to the trans Golgi network. Coatomer complex is required for budding from Golgi membranes, and is essential for the retrograde Golgi-to-ER transport of dilysine-tagged proteins. In mammals, the coatomer can only be recruited by membranes associated to ADP-ribosylation factors (ARFs), which are small GTP-binding proteins; the complex also influences the Golgi structural integrity, as well as the processing, activity, and endocytic recycling of LDL receptors. In terms of biological role, this coatomer complex protein, essential for Golgi budding and vesicular trafficking, is a selective binding protein (RACK) for protein kinase C, epsilon type. It binds to Golgi membranes in a GTP-dependent manner. The chain is Coatomer subunit beta' (Copb2) from Rattus norvegicus (Rat).